We begin with the raw amino-acid sequence, 358 residues long: Glutamine synthetase (358 aa).

Residues 25-104 enclose the GS beta-grasp domain; that stretch reads VQAEYIWIDA…VLCECYDNDG (80 aa). One can recognise a GS catalytic domain in the interval 111–358; the sequence is YRAHCKKVMD…ILVETTVLNN (248 aa).

The protein belongs to the glutamine synthetase family. In terms of assembly, homooctamer.

The protein localises to the cytoplasm. It catalyses the reaction L-glutamate + NH4(+) + ATP = L-glutamine + ADP + phosphate + H(+). This Cryptococcus neoformans var. neoformans serotype D (strain B-3501A) (Filobasidiella neoformans) protein is Glutamine synthetase (GLN1).